Consider the following 151-residue polypeptide: Ribosome maturation factor RimP (151 aa).

Belongs to the RimP family.

It is found in the cytoplasm. In terms of biological role, required for maturation of 30S ribosomal subunits. This chain is Ribosome maturation factor RimP, found in Shewanella putrefaciens (strain CN-32 / ATCC BAA-453).